The following is a 259-amino-acid chain: ATP synthase subunit a (259 aa).

A run of 5 helical transmembrane segments spans residues 29-49 (TVNIDSMVFSVVLGTLFIWLF), 89-109 (LIAPLALTIFVWIFLMNAMDL), 132-154 (SADVNITLSMALGVFFLILFYSI), 209-229 (IFILIAAMLPWWSQWFLNVPW), and 230-250 (AIFHILIITLQAFIFMVLTIV).

This sequence belongs to the ATPase A chain family. In terms of assembly, F-type ATPases have 2 components, CF(1) - the catalytic core - and CF(0) - the membrane proton channel. CF(1) has five subunits: alpha(3), beta(3), gamma(1), delta(1), epsilon(1). CF(0) has three main subunits: a(1), b(2) and c(9-12). The alpha and beta chains form an alternating ring which encloses part of the gamma chain. CF(1) is attached to CF(0) by a central stalk formed by the gamma and epsilon chains, while a peripheral stalk is formed by the delta and b chains.

The protein resides in the cell inner membrane. In terms of biological role, key component of the proton channel; it plays a direct role in the translocation of protons across the membrane. This Tolumonas auensis (strain DSM 9187 / NBRC 110442 / TA 4) protein is ATP synthase subunit a.